The sequence spans 705 residues: Variediene synthase (705 aa).

The interval 9–331 (LNSTLSSVVE…RCPRYHPWLC (323 aa)) is terpene cyclase. Asp100 serves as a coordination point for Mg(2+). Residues Asp100, 186-189 (RIID), Asn230, 234-238 (SFDIE), and 325-326 (RY) each bind substrate. A DDXXD 1 motif is present at residues 100–104 (DNVVE). The short motif at 230–238 (NDYFSFDIE) is the NSE/DTE element. A prenyltransferase region spans residues 332–705 (KEAASLLHQD…VRLLIHRLKV (374 aa)). Positions 349–366 (GRKPQALEEYRSRSHSES) are enriched in basic and acidic residues. A disordered region spans residues 349 to 374 (GRKPQALEEYRSRSHSESDLSDASPT). The isopentenyl diphosphate site is built by Lys424, Arg427, and His456. Mg(2+)-binding residues include Asp463 and Asp467. The short motif at 463–467 (DDIED) is the DDXXD 2 element. Arg472 serves as a coordination point for dimethylallyl diphosphate. Residue Arg473 coordinates isopentenyl diphosphate. Residues Lys550, Thr551, Gln589, Asn596, Lys605, and Lys615 each contribute to the dimethylallyl diphosphate site.

It in the N-terminal section; belongs to the terpene synthase family. In the C-terminal section; belongs to the FPP/GGPP synthase family. In terms of assembly, hexamer. The cofactor is Mg(2+).

The enzyme catalyses isopentenyl diphosphate + (2E,6E)-farnesyl diphosphate = (2E,6E,10E)-geranylgeranyl diphosphate + diphosphate. The catalysed reaction is isopentenyl diphosphate + (2E,6E,10E)-geranylgeranyl diphosphate = (2E,6E,10E,14E)-geranylfarnesyl diphosphate + diphosphate. It carries out the reaction (2E,6E,10E)-geranylgeranyl diphosphate = variediene + diphosphate. It catalyses the reaction (2E,6E,10E,14E)-geranylfarnesyl diphosphate = (R,2E)-alpha-cericerene + diphosphate. Its pathway is secondary metabolite biosynthesis; terpenoid biosynthesis. In terms of biological role, bifunctional terpene synthase that converts dimethylallyl diphosphate (DMAPP) and isopentenyl diphosphate (IPP) into variediene as a single product. The C-terminal prenyltransferase (PT) domain of EvVS catalyzes formation of geranylgeranyl pyrophosphate (GGPP), whereas the N-terminal terpene cyclase (TC) domain catalyzes the cyclization of GGPP to variediene. The PT domain can also synthesize geranylfarnesyl pyrophosphate (GFPP) from the C5 isoprene units in vitro, while the TC domain is able to cyclize GFPP to the sesterterpene (2E)-alpha-cericerene. The chain is Variediene synthase from Emericella variicolor (Aspergillus stellatus).